The primary structure comprises 130 residues: Trypsin inhibitor (130 aa).

The interval 27–49 (LHKQARQSGSGPSPQGPQQRPPL) is disordered. A compositionally biased stretch (low complexity) spans 32–49 (RQSGSGPSPQGPQQRPPL).

It belongs to the 2S seed storage albumins family. As to quaternary structure, the protein consists of two chains linked by disulfide bonds.

Inhibits trypsin with a Ki of 7 x 10(-6) M. This Mutarda arvensis (Charlock mustard) protein is Trypsin inhibitor.